An 89-amino-acid polypeptide reads, in one-letter code: MALDAAVKQSIIKEYATGEGDTGSPEVQVAVLTQRIKDLTEHMKEHKHDYHTQRGLLAMVGRRKRMLSYLKKTDIARYRALIERLGLRR.

It belongs to the universal ribosomal protein uS15 family. As to quaternary structure, part of the 30S ribosomal subunit. Forms a bridge to the 50S subunit in the 70S ribosome, contacting the 23S rRNA.

In terms of biological role, one of the primary rRNA binding proteins, it binds directly to 16S rRNA where it helps nucleate assembly of the platform of the 30S subunit by binding and bridging several RNA helices of the 16S rRNA. Functionally, forms an intersubunit bridge (bridge B4) with the 23S rRNA of the 50S subunit in the ribosome. This chain is Small ribosomal subunit protein uS15, found in Pseudarthrobacter chlorophenolicus (strain ATCC 700700 / DSM 12829 / CIP 107037 / JCM 12360 / KCTC 9906 / NCIMB 13794 / A6) (Arthrobacter chlorophenolicus).